Reading from the N-terminus, the 55-residue chain is uncharacterized protein (55 aa).

This is an uncharacterized protein from Orgyia pseudotsugata multicapsid polyhedrosis virus (OpMNPV).